Reading from the N-terminus, the 314-residue chain is Putative S-adenosyl-L-methionine-dependent methyltransferase MAV_0301 (314 aa).

Residues D132 and 161-162 (DL) each bind S-adenosyl-L-methionine.

The protein belongs to the UPF0677 family.

In terms of biological role, exhibits S-adenosyl-L-methionine-dependent methyltransferase activity. The sequence is that of Putative S-adenosyl-L-methionine-dependent methyltransferase MAV_0301 from Mycobacterium avium (strain 104).